The following is a 147-amino-acid chain: Putative acetyltransferase BSU40680 (147 aa).

The 144-residue stretch at 1–144 (MNVKKITSEQ…PHVLMTKQDD (144 aa)) folds into the N-acetyltransferase domain. CoA contacts are provided by residues 74 to 76 (ICI) and 115 to 117 (GFY).

The protein belongs to the UPF0039 (ElaA) family.

In terms of biological role, could catalyze the transfer of an acetyl group from acetyl coenzyme A (AcCoA) to an acceptor substrate and release both CoA and the acetylated product. In Bacillus subtilis (strain 168), this protein is Putative acetyltransferase BSU40680 (yybD).